The primary structure comprises 228 residues: UPF0173 metal-dependent hydrolase BLi03080/BL00413 (228 aa).

The protein belongs to the UPF0173 family.

This Bacillus licheniformis (strain ATCC 14580 / DSM 13 / JCM 2505 / CCUG 7422 / NBRC 12200 / NCIMB 9375 / NCTC 10341 / NRRL NRS-1264 / Gibson 46) protein is UPF0173 metal-dependent hydrolase BLi03080/BL00413.